A 179-amino-acid chain; its full sequence is MKQFLDFLPLVVFFAFYKLYDIYAATTALIVATAVVLIYSWVRYRKVEKMALITFVLVAVFGGLTIFFHNDEFIKWKVTVIYALFAGALLFSQWVMKKPLIQRMLGKELSLPQQVWSRLNLAWAVFFILCGLANIYIAFWLPQNIWVNFKVFGLTALTLVFTLLSGIYIYRHMPQDDHH.

Helical transmembrane passes span 22 to 42 (IYAA…YSWV), 50 to 70 (MALI…FFHN), 76 to 96 (WKVT…QWVM), 121 to 141 (LAWA…AFWL), and 149 to 169 (FKVF…GIYI).

The protein belongs to the YciB family.

The protein resides in the cell inner membrane. Its function is as follows. Plays a role in cell envelope biogenesis, maintenance of cell envelope integrity and membrane homeostasis. This Klebsiella pneumoniae subsp. pneumoniae (strain ATCC 700721 / MGH 78578) protein is Inner membrane-spanning protein YciB.